Consider the following 1300-residue polypeptide: Nephrocystin-3 (1300 aa).

Residues 82–183 (KNNEVASMQK…LQRLQAQGIQ (102 aa)) adopt a coiled-coil conformation. 9 TPR repeats span residues 443-476 (TMED…ICEL), 916-949 (ADLY…RETA), 958-991 (AQSL…SENA), 1000-1033 (AREL…RQKS), 1066-1099 (ARTL…RERV), 1108-1141 (AQSI…RRRA), 1150-1183 (AYTV…RQKS), 1192-1225 (ATAL…YEDS), and 1234-1267 (GETL…KETE). The segment at 1268–1288 (TSVLGAKAPSGHSSSGGDTYS) is disordered. The segment covering 1278–1288 (GHSSSGGDTYS) has biased composition (polar residues).

Its subcellular location is the cell projection. The protein resides in the cilium. Required for normal ciliary development and function. Inhibits disheveled-1-induced canonical Wnt-signaling activity and may also play a role in the control of non-canonical Wnt signaling that regulates planar cell polarity. Probably acts as a molecular switch between different Wnt signaling pathways. Required for proper convergent extension cell movements. This chain is Nephrocystin-3 (nphp3), found in Xenopus laevis (African clawed frog).